The following is a 628-amino-acid chain: 3-hydroxy-3-methylglutaryl-coenzyme A reductase 2 (628 aa).

Transmembrane regions (helical) follow at residues 38 to 58 (PLYL…YFLL) and 78 to 98 (EIVA…FFGI). The tract at residues 99–212 (DFVQSLIIRP…HEKTVIVTTE (114 aa)) is linker. The N-linked (GlcNAc...) asparagine glycan is linked to Asn-153. A catalytic region spans residues 213–628 (EDEEIIKSVV…SSKDMSNLSS (416 aa)). The active-site Charge relay system is Glu-307. The N-linked (GlcNAc...) asparagine glycan is linked to Asn-371. Lys-439 serves as the catalytic Charge relay system. N-linked (GlcNAc...) asparagine glycosylation is present at Asn-484. The active-site Charge relay system is the Asp-515. His-613 acts as the Proton donor in catalysis. N-linked (GlcNAc...) asparagine glycosylation is found at Asn-617 and Asn-625.

The protein belongs to the HMG-CoA reductase family.

The protein resides in the endoplasmic reticulum membrane. It localises to the mitochondrion membrane. The protein localises to the plastid membrane. It catalyses the reaction (R)-mevalonate + 2 NADP(+) + CoA = (3S)-3-hydroxy-3-methylglutaryl-CoA + 2 NADPH + 2 H(+). The protein operates within metabolic intermediate biosynthesis; (R)-mevalonate biosynthesis; (R)-mevalonate from acetyl-CoA: step 3/3. Its function is as follows. Catalyzes the synthesis of mevalonate. The specific precursor of all isoprenoid compounds present in plants. The sequence is that of 3-hydroxy-3-methylglutaryl-coenzyme A reductase 2 (HMG2) from Gossypium hirsutum (Upland cotton).